We begin with the raw amino-acid sequence, 944 residues long: Protein translocase subunit SecA (944 aa).

Residues Gln96, 114 to 118 (GEGKT), and Asp554 each bind ATP.

The protein belongs to the SecA family. Monomer and homodimer. Part of the essential Sec protein translocation apparatus which comprises SecA, SecYEG and auxiliary proteins SecDF. Other proteins may also be involved.

Its subcellular location is the cell inner membrane. The protein localises to the cytoplasm. The enzyme catalyses ATP + H2O + cellular proteinSide 1 = ADP + phosphate + cellular proteinSide 2.. In terms of biological role, part of the Sec protein translocase complex. Interacts with the SecYEG preprotein conducting channel. Has a central role in coupling the hydrolysis of ATP to the transfer of proteins into and across the cell membrane, serving as an ATP-driven molecular motor driving the stepwise translocation of polypeptide chains across the membrane. The chain is Protein translocase subunit SecA from Hydrogenobaculum sp. (strain Y04AAS1).